A 325-amino-acid chain; its full sequence is E3 ubiquitin-protein ligase SIAH2 (325 aa).

Over residues Met-1 to Cys-15 the composition is skewed to polar residues. A disordered region spans residues Met-1–Gly-43. Phosphoserine is present on Ser-6. A Phosphoserine; by DYRK2 modification is found at Ser-16. Residues Lys-17 to Pro-33 are compositionally biased toward pro residues. Position 24 is a phosphothreonine; by MAPK14 (Thr-24). Phosphoserine; by DYRK2 and MAPK14 is present on Ser-29. The span at Pro-34 to Gly-43 shows a compositional bias: low complexity. Phosphoserine; by DYRK2 is present on Ser-69. An RING-type zinc finger spans residues Cys-81–Arg-116. The residue at position 120 (Thr-120) is a Phosphothreonine; by DYRK2. The SBD stretch occupies residues Val-131 to Cys-323. The segment at Ala-134–Lys-194 adopts an SIAH-type zinc-finger fold. Residues Cys-139, Cys-146, His-158, Cys-162, Cys-169, Cys-176, His-188, and His-193 each coordinate Zn(2+).

The protein belongs to the SINA (Seven in absentia) family. Homodimer. Interacts with UBE2E2. Interacts with VAV1, without mediating its ubiquitin-mediated degradation. Interacts with CACYBP/SIP. Probable component of some large E3 complex possibly composed of UBE2D1, SIAH2, CACYBP/SIP, SKP1, APC and TBL1X. Interacts with UBE2I. Interacts with PEG10, which may inhibit its activity. Interacts with EGLN2 and SNCAIP. Interacts with DYRK2. Interacts with PEG3. Interacts with NR1D1 and NR1D2. Interacts with DCC. Interacts with AXIN1. In terms of processing, phosphorylated at Ser-29 by DYRK2; this increases the ubiquitin ligase activity and promotes degradation of EGLN3. Phosphorylated at Thr-24 and Ser-29 by MAPK14, which mediates the degradation by the proteasome of EGLN3. As to expression, widely expressed at low level in embryos and adults. Expressed in a specific population of germ cells within both the mouse ovary and testis. Absent in primordial oocytes but expressed in all growing oocytes, coincident with their recruitment from the pool of quiescent cells. Its level of expression increases as the oocytes mature. Expressed in Graafian follicles and in fertilized zygotes up until the two cell stage, a time of extensive maternal transcript degradation and zygotic gene activation. Expressed in the testis from postmeiotic spermatids.

It is found in the cytoplasm. The protein resides in the nucleus. It catalyses the reaction S-ubiquitinyl-[E2 ubiquitin-conjugating enzyme]-L-cysteine + [acceptor protein]-L-lysine = [E2 ubiquitin-conjugating enzyme]-L-cysteine + N(6)-ubiquitinyl-[acceptor protein]-L-lysine.. The protein operates within protein modification; protein ubiquitination. In terms of biological role, E3 ubiquitin-protein ligase that mediates ubiquitination and subsequent proteasomal degradation of target proteins. E3 ubiquitin ligases accept ubiquitin from an E2 ubiquitin-conjugating enzyme in the form of a thioester and then directly transfers the ubiquitin to targeted substrates. Mediates E3 ubiquitin ligase activity either through direct binding to substrates or by functioning as the essential RING domain subunit of larger E3 complexes. Mediates ubiquitination and proteasomal degradation of DYRK2 in response to hypoxia. Promotes monoubiquitination of SNCA. Triggers the ubiquitin-mediated degradation of many substrates, including proteins involved in transcription regulation (GPS2, POU2AF1, PML, NCOR1), a cell surface receptor (DCC), an antiapoptotic protein (BAG1), and a protein involved in synaptic vesicle function in neurons (SYP). It is thereby involved in apoptosis, tumor suppression, cell cycle, transcription and signaling processes. Has some overlapping function with SIAH1. Triggers the ubiquitin-mediated degradation of TRAF2, whereas SIAH1 does not. Regulates cellular clock function via ubiquitination of the circadian transcriptional repressors NR1D1 and NR1D2 leading to their proteasomal degradation. Plays an important role in mediating the rhythmic degradation/clearance of NR1D1 and NR1D2 contributing to their circadian profile of protein abundance. Mediates ubiquitination and degradation of EGLN2 and EGLN3 in response to the unfolded protein response (UPR), leading to their degradation and subsequent stabilization of ATF4. Also part of the Wnt signaling pathway in which it mediates the Wnt-induced ubiquitin-mediated proteasomal degradation of AXIN1. The sequence is that of E3 ubiquitin-protein ligase SIAH2 (Siah2) from Mus musculus (Mouse).